Reading from the N-terminus, the 21-residue chain is Large ribosomal subunit protein uL10 (21 aa).

Belongs to the universal ribosomal protein uL10 family. Part of the ribosomal stalk of the 50S ribosomal subunit. The N-terminus interacts with L11 and the large rRNA to form the base of the stalk. The C-terminus forms an elongated spine to which L12 dimers bind in a sequential fashion forming a multimeric L10(L12)X complex.

In terms of biological role, forms part of the ribosomal stalk, playing a central role in the interaction of the ribosome with GTP-bound translation factors. The chain is Large ribosomal subunit protein uL10 (rplJ) from Proteus vulgaris.